We begin with the raw amino-acid sequence, 241 residues long: Ribulose-phosphate 3-epimerase 1 (241 aa).

Position 21 (serine 21) interacts with substrate. 3 residues coordinate a divalent metal cation: histidine 46, aspartate 48, and histidine 79. Catalysis depends on aspartate 48, which acts as the Proton acceptor. Substrate is bound by residues histidine 79, 155 to 158 (GFGG), 192 to 194 (DGG), and 214 to 215 (GS). Aspartate 192 contributes to the a divalent metal cation binding site. Aspartate 192 acts as the Proton donor in catalysis.

Belongs to the ribulose-phosphate 3-epimerase family. A divalent metal cation is required as a cofactor.

It carries out the reaction D-ribulose 5-phosphate = D-xylulose 5-phosphate. It functions in the pathway carbohydrate degradation. Functionally, catalyzes the reversible epimerization of D-ribulose 5-phosphate to D-xylulose 5-phosphate. The sequence is that of Ribulose-phosphate 3-epimerase 1 from Cupriavidus necator (strain ATCC 17699 / DSM 428 / KCTC 22496 / NCIMB 10442 / H16 / Stanier 337) (Ralstonia eutropha).